Reading from the N-terminus, the 84-residue chain is Putative antitoxin RelB4 (84 aa).

Its function is as follows. Antitoxin component of a type II toxin-antitoxin (TA) system. Its cognate toxin is RelE4 (Potential). This is Putative antitoxin RelB4 (relB4) from Methanocaldococcus jannaschii (strain ATCC 43067 / DSM 2661 / JAL-1 / JCM 10045 / NBRC 100440) (Methanococcus jannaschii).